Reading from the N-terminus, the 141-residue chain is Cystatin (141 aa).

The signal sequence occupies residues Met1–Met26. The Cystatin domain maps to Gly29–Trp129. Residues Gln73–Gly77 carry the Secondary area of contact motif. 2 disulfide bridges follow: Cys91-Cys107 and Cys120-Cys140.

Belongs to the cystatin family. In terms of tissue distribution, expressed at a low level by the venom gland (at protein level).

It is found in the secreted. Functionally, inhibits various C1 cysteine proteases including cathepsin L, papain and cathepsin B. This protein has no toxic activity and its function in the venom is unknown. It may play a role as a housekeeping or regulatory protein. This chain is Cystatin, found in Oxyuranus scutellatus scutellatus (Australian taipan).